The primary structure comprises 164 residues: Transcription elongation factor GreA (164 aa).

Residues 50–76 adopt a coiled-coil conformation; the sequence is YHAAREEQGQQEARIRQLQDLLSNAKV.

It belongs to the GreA/GreB family.

Necessary for efficient RNA polymerase transcription elongation past template-encoded arresting sites. The arresting sites in DNA have the property of trapping a certain fraction of elongating RNA polymerases that pass through, resulting in locked ternary complexes. Cleavage of the nascent transcript by cleavage factors such as GreA or GreB allows the resumption of elongation from the new 3'terminus. GreA releases sequences of 2 to 3 nucleotides. This chain is Transcription elongation factor GreA, found in Mycobacterium bovis (strain ATCC BAA-935 / AF2122/97).